The sequence spans 389 residues: Teichoic acid ribitol-phosphate primase (389 aa).

The protein belongs to the CDP-glycerol glycerophosphotransferase family.

Its subcellular location is the cell membrane. The catalysed reaction is 4-O-[(2R)-glycerylphospho]-N-acetyl-beta-D-mannosaminyl-(1-&gt;4)-N-acetyl-alpha-D-glucosaminyl di-trans,octa-cis-undecaprenyl diphosphate + CDP-L-ribitol = 4-O-[1-D-ribitylphospho-(2R)-1-glycerylphospho]-N-acetyl-beta-D-mannosaminyl-(1-&gt;4)-N-acetyl-alpha-D-glucosaminyl di-trans,octa-cis-undecaprenyl diphosphate + CMP + H(+). It functions in the pathway cell wall biogenesis; poly(ribitol phosphate) teichoic acid biosynthesis. Catalyzes the addition of a single ribitol phosphate unit onto the glycerol phosphate of the linkage unit, as a primer for polymerisation by TarL. This Bacillus spizizenii (strain ATCC 23059 / NRRL B-14472 / W23) (Bacillus subtilis subsp. spizizenii) protein is Teichoic acid ribitol-phosphate primase (tarK).